Reading from the N-terminus, the 453-residue chain is Polar tube protein 1 (453 aa).

The first 22 residues, 1 to 22, serve as a signal peptide directing secretion; that stretch reads MKGISKILSASIMVMKLGNVYS. The segment at 61–87 is disordered; sequence YVPSSPTTSSSTPGTNNDNETSPTTED. The segment covering 63 to 73 has biased composition (low complexity); that stretch reads PSSPTTSSSTP. The segment covering 74–87 has biased composition (polar residues); that stretch reads GTNNDNETSPTTED. N-linked (GlcNAc...) asparagine glycans are attached at residues N79, N225, N245, N265, N285, N305, N325, and N344. 6 repeat units span residues 214–233, 234–253, 254–273, 274–293, 294–313, and 314–333. The segment at 214–333 is 6 X 20 AA approximate tandem repeats; that stretch reads PCLPTQGGDG…SNQTIPGVIS (120 aa).

Post-translationally, O-mannosylated. O-mannosylation has functional significance for the ability of microsporidia to invade their host cells.

The protein localises to the spore polar tube. Involved in formation of a polar tube through which the infectious agent is passed on to the host cell. The protein is Polar tube protein 1 (PTP1) of Encephalitozoon hellem (Microsporidian parasite).